The sequence spans 254 residues: HTH-type transcriptional regulator GlvR (254 aa).

Residues 1–77 enclose the HTH rpiR-type domain; it reads MQLEELINQH…VFLKWEDQPE (77 aa). A DNA-binding region (H-T-H motif) is located at residues 37 to 56; sequence IDALAKACSVSRSSILRLAQ. The region spanning 106-248 is the SIS domain; that stretch reads MCQLIDAADR…FRAYVDYKEA (143 aa).

Its function is as follows. Positive regulator of the glv operon expression, which consists of GlvA, GlvR and GlvC. This is HTH-type transcriptional regulator GlvR (glvR) from Bacillus subtilis (strain 168).